The primary structure comprises 305 residues: UDP-3-O-acyl-N-acetylglucosamine deacetylase (305 aa).

Zn(2+) contacts are provided by His-78, His-237, and Asp-241. His-264 acts as the Proton donor in catalysis.

This sequence belongs to the LpxC family. Zn(2+) serves as cofactor.

It catalyses the reaction a UDP-3-O-[(3R)-3-hydroxyacyl]-N-acetyl-alpha-D-glucosamine + H2O = a UDP-3-O-[(3R)-3-hydroxyacyl]-alpha-D-glucosamine + acetate. It functions in the pathway glycolipid biosynthesis; lipid IV(A) biosynthesis; lipid IV(A) from (3R)-3-hydroxytetradecanoyl-[acyl-carrier-protein] and UDP-N-acetyl-alpha-D-glucosamine: step 2/6. In terms of biological role, catalyzes the hydrolysis of UDP-3-O-myristoyl-N-acetylglucosamine to form UDP-3-O-myristoylglucosamine and acetate, the committed step in lipid A biosynthesis. The sequence is that of UDP-3-O-acyl-N-acetylglucosamine deacetylase from Paraburkholderia phytofirmans (strain DSM 17436 / LMG 22146 / PsJN) (Burkholderia phytofirmans).